Consider the following 146-residue polypeptide: VQWTAEEKQLITGLWGKVNVAECGGEALARLLIVYPWTQRFFASFGNLSSPTAVLGNPKVQAHGKKVLTSFGEAVKNLDSIKGTFAQLSELHCDKLHVDPENFRLLGDILVVVLAAHFGKDFTPDCQAAWQKLVRVVAHALARKYH.

In terms of domain architecture, Globin spans 2-146; that stretch reads QWTAEEKQLI…VAHALARKYH (145 aa). Positions 63 and 92 each coordinate heme b.

Belongs to the globin family. In terms of assembly, heterotetramer of two alpha chains and two beta chains. In terms of tissue distribution, red blood cells.

Its function is as follows. Involved in oxygen transport from the lung to the various peripheral tissues. This is Hemoglobin subunit beta (HBB) from Turdus merula (Common blackbird).